A 130-amino-acid polypeptide reads, in one-letter code: Succinate dehydrogenase assembly factor 3, mitochondrial (130 aa).

Residues 1–8 (MRPSLLRL) constitute a mitochondrion transit peptide.

This sequence belongs to the complex I LYR family. SDHAF3 subfamily. Interacts with the iron-sulfur protein subunit within the SDH catalytic dimer.

It localises to the mitochondrion matrix. Plays an essential role in the assembly of succinate dehydrogenase (SDH), an enzyme complex (also referred to as respiratory complex II) that is a component of both the tricarboxylic acid (TCA) cycle and the mitochondrial electron transport chain, and which couples the oxidation of succinate to fumarate with the reduction of ubiquinone (coenzyme Q) to ubiquinol. Promotes maturation of the iron-sulfur protein subunit of the SDH catalytic dimer, protecting it from the deleterious effects of oxidants. May act together with SDHAF1. In Gibberella zeae (strain ATCC MYA-4620 / CBS 123657 / FGSC 9075 / NRRL 31084 / PH-1) (Wheat head blight fungus), this protein is Succinate dehydrogenase assembly factor 3, mitochondrial.